We begin with the raw amino-acid sequence, 146 residues long: Hemoglobin subunit beta (146 aa).

N-acetylvaline is present on valine 1. The Globin domain maps to 2–146 (HLTDAEKALV…VATALAHKYH (145 aa)). Position 12 is a phosphothreonine (threonine 12). A Phosphoserine modification is found at serine 44. Lysine 59 is subject to N6-acetyllysine. A heme b-binding site is contributed by histidine 63. Position 82 is an N6-acetyllysine (lysine 82). A heme b-binding site is contributed by histidine 92. S-nitrosocysteine is present on cysteine 93. Lysine 144 is subject to N6-acetyllysine.

The protein belongs to the globin family. In terms of assembly, heterotetramer of two alpha chains and two beta chains. Red blood cells.

Its function is as follows. Involved in oxygen transport from the lung to the various peripheral tissues. This is Hemoglobin subunit beta from Peromyscus crinitus (Canyon mouse).